Here is a 59-residue protein sequence, read N- to C-terminus: MIEVSSMERVYQCLRCGLTFRTKKQLIRHLVNTEKVNPLSIDYYYQSFSVSLKDVNKII.

A C2H2-type; degenerate zinc finger spans residues 11-33 (YQCLRCGLTFRTKKQLIRHLVNT).

The chain is Putative zinc finger protein ORF59a from Acidianus hospitalis (AFV-1).